We begin with the raw amino-acid sequence, 464 residues long: NADH-quinone oxidoreductase subunit N (464 aa).

The next 14 membrane-spanning stretches (helical) occupy residues 6 to 26 (FLYI…LVLG), 36 to 56 (SMSL…LIYF), 75 to 95 (CLAR…FFFA), 101 to 121 (YEFA…VEAH), 123 to 143 (FLSF…LVCF), 157 to 177 (FFVL…LVYG), 197 to 217 (LGAT…LGAV), 231 to 253 (PTVA…FAGL), 257 to 279 (VVIP…MVVG), 293 to 313 (FAYA…TGVV), 317 to 337 (PVLF…TVLL), 360 to 380 (AFTF…SGFF), 395 to 415 (FGVP…IPCF), and 439 to 459 (NVGL…VVLL).

Belongs to the complex I subunit 2 family. In terms of assembly, NDH-1 is composed of 14 different subunits. Subunits NuoA, H, J, K, L, M, N constitute the membrane sector of the complex.

The protein localises to the cell inner membrane. The enzyme catalyses a quinone + NADH + 5 H(+)(in) = a quinol + NAD(+) + 4 H(+)(out). Functionally, NDH-1 shuttles electrons from NADH, via FMN and iron-sulfur (Fe-S) centers, to quinones in the respiratory chain. The immediate electron acceptor for the enzyme in this species is believed to be ubiquinone. Couples the redox reaction to proton translocation (for every two electrons transferred, four hydrogen ions are translocated across the cytoplasmic membrane), and thus conserves the redox energy in a proton gradient. This is NADH-quinone oxidoreductase subunit N from Anaplasma phagocytophilum (strain HZ).